The chain runs to 208 residues: Putative speedy protein E7 (208 aa).

Belongs to the Speedy/Ringo family.

The sequence is that of Putative speedy protein E7 (SPDYE7P) from Homo sapiens (Human).